The following is a 670-amino-acid chain: Neutral ceramidase (670 aa).

Residues 1-24 form the signal peptide; it reads MSRSAFTALLLSCVLLALSMPARA. Residue His61 coordinates Mg(2+). Residues Asn84, Gln92, and Asp111 each coordinate substrate. Residue His121 coordinates Zn(2+). Ser130 lines the substrate pocket. His228 serves as a coordination point for Zn(2+). The active-site Nucleophile is Ser274. Cys346 and Cys394 form a disulfide bridge. A Zn(2+)-binding site is contributed by Glu435. Tyr469 serves as a coordination point for substrate. Residue Tyr472 participates in Zn(2+) binding. Residues Asp603, Asp605, and Thr608 each contribute to the Mg(2+) site. Positions 644-670 are required for correct folding and localization; sequence NAKNFWTQKISEIGGSTRSFEVLGTTP.

The protein belongs to the neutral ceramidase family. Homodimer. The cofactor is Zn(2+). Mg(2+) is required as a cofactor.

It is found in the secreted. It catalyses the reaction an N-acylsphing-4-enine + H2O = sphing-4-enine + a fatty acid. With respect to regulation, inhibited by EDTA, EGTA and D/L-sphinganine D-erythro-sphingosine. L-erythro-sphingosine is a less powerful inhibitor. Stimulated by glycerophospholipids: cardiolipin is the most effective, followed by phosphatidic acid, phosphatidylethanolamine and phosphatidylglycerol, whereas phosphatidylcholine, lysophosphatidic acid and diacylglycerol are less effective. Catalyzes the cleavage of the N-acyl linkage of the ceramides (Cers) to yield sphingosine (Sph) and free fatty acid at an optimal pH of 8-9. Also catalyzes the synthesis of Cers from Sph and fatty acid. The sequence is that of Neutral ceramidase from Pseudomonas aeruginosa (strain ATCC 15692 / DSM 22644 / CIP 104116 / JCM 14847 / LMG 12228 / 1C / PRS 101 / PAO1).